The sequence spans 296 residues: L-ornithine N(alpha)-acyltransferase (296 aa).

This sequence belongs to the acetyltransferase family. OlsB subfamily.

It catalyses the reaction a (3R)-hydroxyacyl-[ACP] + L-ornithine = a lyso-ornithine lipid + holo-[ACP] + H(+). Its pathway is lipid metabolism. In terms of biological role, catalyzes the first step in the biosynthesis of ornithine lipids, which are phosphorus-free membrane lipids. Catalyzes the 3-hydroxyacyl-acyl carrier protein-dependent acylation of ornithine to form lyso-ornithine lipid (LOL). The sequence is that of L-ornithine N(alpha)-acyltransferase from Rhizobium meliloti (strain 1021) (Ensifer meliloti).